The primary structure comprises 78 residues: Large ribosomal subunit protein bL28 (78 aa).

The segment at 1 to 24 (MSRVCQVTGKRPAVGNNRSHANNA) is disordered.

Belongs to the bacterial ribosomal protein bL28 family.

The protein is Large ribosomal subunit protein bL28 of Aeromonas salmonicida (strain A449).